An 89-amino-acid polypeptide reads, in one-letter code: Small ribosomal subunit protein uS17 (89 aa).

Belongs to the universal ribosomal protein uS17 family. In terms of assembly, part of the 30S ribosomal subunit.

One of the primary rRNA binding proteins, it binds specifically to the 5'-end of 16S ribosomal RNA. This Polaromonas naphthalenivorans (strain CJ2) protein is Small ribosomal subunit protein uS17.